We begin with the raw amino-acid sequence, 123 residues long: Large ribosomal subunit protein bL19 (123 aa).

Belongs to the bacterial ribosomal protein bL19 family.

In terms of biological role, this protein is located at the 30S-50S ribosomal subunit interface and may play a role in the structure and function of the aminoacyl-tRNA binding site. This Acinetobacter baylyi (strain ATCC 33305 / BD413 / ADP1) protein is Large ribosomal subunit protein bL19.